The primary structure comprises 590 residues: Cytosolic Fe-S cluster assembly factor nar1 (590 aa).

Residue Cys20 coordinates [4Fe-4S] cluster. The segment at 25-50 is disordered; the sequence is ESLPQKQSNENPYEVTTEDKVQPENP. Cys60, Cys63, Cys66, Cys204, and Cys259 together coordinate [4Fe-4S] cluster. The segment at 423-446 is disordered; the sequence is PGAKVATGQTAGGRRQPISRNGAS. [4Fe-4S] cluster is bound by residues Cys461 and Cys465.

The protein belongs to the NARF family.

Component of the cytosolic Fe/S protein assembly machinery. Required for maturation of extramitochondrial Fe/S proteins. May play a role in the transfer of pre-assembled Fe/S clusters to target apoproteins. The protein is Cytosolic Fe-S cluster assembly factor nar1 (nar1) of Emericella nidulans (strain FGSC A4 / ATCC 38163 / CBS 112.46 / NRRL 194 / M139) (Aspergillus nidulans).